A 1147-amino-acid polypeptide reads, in one-letter code: uncharacterized protein (1147 aa).

Disordered stretches follow at residues 226-245 (FGQG…GQVD), 255-297 (IQGT…QEKA), 431-617 (SQHP…QSCI), 647-670 (EEMD…DPVR), 705-945 (HRHR…RRLQ), 1003-1032 (RQQQ…EAEK), and 1060-1090 (YQRR…RLAQ). Basic and acidic residues predominate over residues 268-296 (WQKDETQTEDTSKDNHHCIHTSKENHQEK). Over residues 431-441 (SQHPPKGKAQR) the composition is skewed to basic residues. Over residues 538 to 549 (PAGGALPAAGQA) the composition is skewed to low complexity. A compositionally biased stretch (polar residues) spans 584-603 (LNETSPLTQKPENQGAQQSL). The segment covering 743–752 (NQKTSNNISN) has biased composition (polar residues). The stretch at 743–804 (NQKTSNNISN…ESKAEKKSQL (62 aa)) forms a coiled coil. Over residues 768-802 (TDKSKAPKREKEGKLHEEAEAAVGKSKESKAEKKS) the composition is skewed to basic and acidic residues. Residues 807–819 (KGKKTGAKGKRTR) show a composition bias toward basic residues. Polar residues predominate over residues 870 to 884 (SQVSIDGRSSPTQTA). Basic and acidic residues predominate over residues 895-945 (DRSHEDPSKAFLVKREQEKASRDRLRAERAEMRRLEVERKRREQEEQRRLQ). A coiled-coil region spans residues 907 to 1112 (VKREQEKASR…QKDALKKHLH (206 aa)).

This is an uncharacterized protein from Bos taurus (Bovine).